The sequence spans 105 residues: uncharacterized protein (105 aa).

Transmembrane regions (helical) follow at residues 14–34 (ILLM…IVAW), 41–61 (ETVC…FAFL), and 80–100 (VGFT…IFTI).

The protein resides in the cell membrane. This is an uncharacterized protein from Treponema pallidum (strain Nichols).